We begin with the raw amino-acid sequence, 223 residues long: Neurotrophic factor BDNF precursor form (223 aa).

The N-terminal stretch at 1 to 5 (SCMKA) is a signal peptide. The propeptide occupies 6-114 (APMKEVSIRG…AANMSMRVRR (109 aa)). An N-linked (GlcNAc...) asparagine glycan is attached at Asn-107. 2 disulfides stabilise this stretch: Cys-127–Cys-194 and Cys-172–Cys-223.

The protein belongs to the NGF-beta family.

Its subcellular location is the secreted. Functionally, promotes the survival of neuronal populations that are all located either in the central nervous system or directly connected to it. In Boa constrictor (Boa), this protein is Neurotrophic factor BDNF precursor form (BDNF).